The following is a 200-amino-acid chain: Holliday junction branch migration complex subunit RuvA (200 aa).

Residues 1–63 are domain I; the sequence is MIALLTGQIA…EDAILLYGFR (63 aa). The interval 64-142 is domain II; it reads TRTEKSFFQL…KLDSGSIPAG (79 aa). Residues 143 to 153 form a flexible linker region; it reads DAVGRSLPAGS. A domain III region spans residues 153-200; sequence SVLDDVSSALVNLGYKDPQVRKVLAELDCAGSASVEEVLKQALKILMK.

The protein belongs to the RuvA family. Homotetramer. Forms an RuvA(8)-RuvB(12)-Holliday junction (HJ) complex. HJ DNA is sandwiched between 2 RuvA tetramers; dsDNA enters through RuvA and exits via RuvB. An RuvB hexamer assembles on each DNA strand where it exits the tetramer. Each RuvB hexamer is contacted by two RuvA subunits (via domain III) on 2 adjacent RuvB subunits; this complex drives branch migration. In the full resolvosome a probable DNA-RuvA(4)-RuvB(12)-RuvC(2) complex forms which resolves the HJ.

It localises to the cytoplasm. Its function is as follows. The RuvA-RuvB-RuvC complex processes Holliday junction (HJ) DNA during genetic recombination and DNA repair, while the RuvA-RuvB complex plays an important role in the rescue of blocked DNA replication forks via replication fork reversal (RFR). RuvA specifically binds to HJ cruciform DNA, conferring on it an open structure. The RuvB hexamer acts as an ATP-dependent pump, pulling dsDNA into and through the RuvAB complex. HJ branch migration allows RuvC to scan DNA until it finds its consensus sequence, where it cleaves and resolves the cruciform DNA. The chain is Holliday junction branch migration complex subunit RuvA from Trichlorobacter lovleyi (strain ATCC BAA-1151 / DSM 17278 / SZ) (Geobacter lovleyi).